Reading from the N-terminus, the 498-residue chain is ATP synthase subunit beta, chloroplastic (498 aa).

172-179 contacts ATP; that stretch reads GGAGVGKT.

It belongs to the ATPase alpha/beta chains family. In terms of assembly, F-type ATPases have 2 components, CF(1) - the catalytic core - and CF(0) - the membrane proton channel. CF(1) has five subunits: alpha(3), beta(3), gamma(1), delta(1), epsilon(1). CF(0) has four main subunits: a(1), b(1), b'(1) and c(9-12).

The protein resides in the plastid. It localises to the chloroplast thylakoid membrane. It catalyses the reaction ATP + H2O + 4 H(+)(in) = ADP + phosphate + 5 H(+)(out). Produces ATP from ADP in the presence of a proton gradient across the membrane. The catalytic sites are hosted primarily by the beta subunits. The polypeptide is ATP synthase subunit beta, chloroplastic (Hyophorbe lagenicaulis (Bottle palm)).